The primary structure comprises 524 residues: Probable serine/threonine-protein kinase WNK10 (524 aa).

Residues 16–273 (IRYNDVLGRG…ALELLKDQLL (258 aa)) enclose the Protein kinase domain. Residues 96–99 (TELF) and Lys-146 each bind ATP. The Proton acceptor role is filled by Asp-163. Ser-477 carries the phosphoserine modification. Residues 480–523 (SNKQSEDLKTELNVIESQYNQSCQRLLRMKEEAIEKAKRKWMKL) adopt a coiled-coil conformation.

It belongs to the protein kinase superfamily. Ser/Thr protein kinase family. WNK subfamily.

It carries out the reaction L-seryl-[protein] + ATP = O-phospho-L-seryl-[protein] + ADP + H(+). The catalysed reaction is L-threonyl-[protein] + ATP = O-phospho-L-threonyl-[protein] + ADP + H(+). Functionally, may regulate flowering time by modulating the photoperiod pathway. The chain is Probable serine/threonine-protein kinase WNK10 (WNK10) from Arabidopsis thaliana (Mouse-ear cress).